The chain runs to 183 residues: Ribonuclease H (183 aa).

The RNase H type-1 domain occupies 2–151 (SQARFIAFSD…VDQLAQAAAR (150 aa)). Mg(2+) is bound by residues aspartate 11, glutamate 57, aspartate 79, and aspartate 143.

It belongs to the RNase H family. In terms of assembly, monomer. Requires Mg(2+) as cofactor.

Its subcellular location is the cytoplasm. The enzyme catalyses Endonucleolytic cleavage to 5'-phosphomonoester.. Endonuclease that specifically degrades the RNA of RNA-DNA hybrids. In Anaeromyxobacter dehalogenans (strain 2CP-1 / ATCC BAA-258), this protein is Ribonuclease H.